We begin with the raw amino-acid sequence, 42 residues long: Photosystem I reaction center subunit IX (42 aa).

A helical membrane pass occupies residues 7–27 (YLSVAPVLSTLWFVSLAGLLI).

The protein belongs to the PsaJ family.

It localises to the plastid. Its subcellular location is the chloroplast thylakoid membrane. Functionally, may help in the organization of the PsaE and PsaF subunits. The chain is Photosystem I reaction center subunit IX from Capsella bursa-pastoris (Shepherd's purse).